A 351-amino-acid polypeptide reads, in one-letter code: S-adenosylmethionine:tRNA ribosyltransferase-isomerase (351 aa).

Belongs to the QueA family. In terms of assembly, monomer.

Its subcellular location is the cytoplasm. The catalysed reaction is 7-aminomethyl-7-carbaguanosine(34) in tRNA + S-adenosyl-L-methionine = epoxyqueuosine(34) in tRNA + adenine + L-methionine + 2 H(+). It participates in tRNA modification; tRNA-queuosine biosynthesis. Its function is as follows. Transfers and isomerizes the ribose moiety from AdoMet to the 7-aminomethyl group of 7-deazaguanine (preQ1-tRNA) to give epoxyqueuosine (oQ-tRNA). In Photobacterium profundum (strain SS9), this protein is S-adenosylmethionine:tRNA ribosyltransferase-isomerase.